The primary structure comprises 307 residues: sn-1-specific diacylglycerol lipase ABHD11 (307 aa).

A mitochondrion-targeting transit peptide spans 1–34 (MLRWARAWRVPRGVLGASSPRRLAVPVTFCSSRS). Lys79 is subject to N6-succinyllysine. Catalysis depends on Ser133, which acts as the Charge relay system. An N6-succinyllysine modification is found at Lys196. Residues Asp229 and His288 each act as charge relay system in the active site.

It belongs to the AB hydrolase superfamily. As to quaternary structure, interacts with OGDH and DLST; this interaction maintains the functional lipoylation of the 2-oxoglutarate dehydrogenase complex. Post-translationally, phosphorylated. As to expression, expressed in white adipose tissues.

It localises to the mitochondrion. Its subcellular location is the mitochondrion matrix. The enzyme catalyses 1-octadecanoyl-2-(5Z,8Z,11Z,14Z-eicosatetraenoyl)-sn-glycerol + H2O = 2-(5Z,8Z,11Z,14Z-eicosatetraenoyl)-glycerol + octadecanoate + H(+). The catalysed reaction is a 1,2-diacyl-sn-glycerol + H2O = a 2-acylglycerol + a fatty acid + H(+). It carries out the reaction a 1,3-diacyl-sn-glycerol + H2O = a 1-acyl-sn-glycerol + a fatty acid + H(+). It catalyses the reaction 1-octadecanoyl-2-(9Z-octadecenoyl)-sn-glycerol + H2O = 2-(9Z-octadecenoyl)-glycerol + octadecanoate + H(+). The enzyme catalyses 1-octadecanoyl-2-(4Z,7Z,10Z,13Z,16Z,19Z-docosahexaenoyl)-sn-glycerol + H2O = 2-(4Z,7Z,10Z,13Z,16Z,19Z-docosahexaenoyl)-glycerol + octadecanoate + H(+). The catalysed reaction is 1,2-didecanoylglycerol + H2O = decanoylglycerol + decanoate + H(+). In terms of biological role, catalyzes the hydrolysis of diacylglycerol in vitro and may function as a key regulator in lipid metabolism, namely by regulating the intracellular levels of diacylglycerol. 1,2-diacyl-sn-glycerols are the preferred substrate over 1,3-diacyl-sn-glycerols. The enzyme hydrolyzes stearate in preference to palmitate from the sn-1 position of 1,2-diacyl-sn-glycerols. Maintains the functional lipoylation of the 2-oxoglutarate dehydrogenase complex (OGDHc) through its interaction with the OGDHc by preventing the formation of lipoyl adducts. In addition, is also required for the expansion and differentiation of embryonic stem cells (ESCs). The polypeptide is sn-1-specific diacylglycerol lipase ABHD11 (Mus musculus (Mouse)).